Here is a 599-residue protein sequence, read N- to C-terminus: Aspartate--tRNA(Asp/Asn) ligase (599 aa).

Glu-180 is an L-aspartate binding site. An aspartate region spans residues 204–207; it reads QLLK. An L-aspartate-binding site is contributed by Arg-226. Residues 226–228 and Gln-235 each bind ATP; that span reads RDE. L-aspartate is bound at residue His-457. Position 491 (Glu-491) interacts with ATP. Arg-498 is a binding site for L-aspartate. Position 543-546 (543-546) interacts with ATP; sequence GWDR. The segment at 565-599 is disordered; the sequence is KAGGGRDPLTGAPAPISDEQRAETGVDYDPDADEN. Acidic residues predominate over residues 590–599; the sequence is VDYDPDADEN.

Belongs to the class-II aminoacyl-tRNA synthetase family. Type 1 subfamily. Homodimer.

It is found in the cytoplasm. It catalyses the reaction tRNA(Asx) + L-aspartate + ATP = L-aspartyl-tRNA(Asx) + AMP + diphosphate. Aspartyl-tRNA synthetase with relaxed tRNA specificity since it is able to aspartylate not only its cognate tRNA(Asp) but also tRNA(Asn). Reaction proceeds in two steps: L-aspartate is first activated by ATP to form Asp-AMP and then transferred to the acceptor end of tRNA(Asp/Asn). The polypeptide is Aspartate--tRNA(Asp/Asn) ligase (Bifidobacterium longum (strain NCC 2705)).